Consider the following 508-residue polypeptide: Putative inorganic phosphate transporter 1-13 (508 aa).

Residues 1–22 (MAGNQQLRVLHALDIARTQLYH) lie on the Cytoplasmic side of the membrane. The helical transmembrane segment at 23–43 (FIAIVIAGMGFFTDAYDLFSI) threads the bilayer. The Extracellular portion of the chain corresponds to 44-64 (SLVADLLGHVYYHGELPRNIH). Residues 65–85 (AAVTGIALCGTVPGQLVFGWL) traverse the membrane as a helical segment. At 86-93 (GDKMGRKR) the chain is on the cytoplasmic side. The helical transmembrane segment at 94 to 114 (VYGITLLLMVVSSLASGLSFS) threads the bilayer. At 115–117 (KHE) the chain is on the extracellular side. A helical membrane pass occupies residues 118–138 (GMNIIAVLCFFRFWLGVSIGG). Residues 139–159 (DYPLSATIMSEYANKRTRGAF) are Cytoplasmic-facing. The chain crosses the membrane as a helical span at residues 160–180 (IAAVFAMQGFGNLAAGIIGMI). Residues 181–192 (VSAAFKHSSASK) lie on the Extracellular side of the membrane. Residues 193–213 (IDYAWRIILMFGAIPAALTYH) form a helical membrane-spanning segment. The Cytoplasmic segment spans residues 214–277 (WRMKMPETAR…FEFLHRHGLH (64 aa)). The chain crosses the membrane as a helical span at residues 278-298 (LLGTTVCWFVLDVTFYSLNIF). The Extracellular portion of the chain corresponds to 299–328 (MKNIFTEVGLLPRLDSEYHHTLQRMITMTA). A helical membrane pass occupies residues 329–349 (VHTFISLCGALPGYFFTVAFV). Residues 350–354 (DRIGR) lie on the Cytoplasmic side of the membrane. A helical membrane pass occupies residues 355 to 375 (VKIQLIGFTMMTVFMLCLAIP). The Extracellular segment spans residues 376-389 (YDQWLRHKNKYGFA). A helical membrane pass occupies residues 390 to 410 (VMYGLTFFFANFGPNTTTFII). Topologically, residues 411–424 (PAEIFPARLRSTCH) are cytoplasmic. The helical transmembrane segment at 425–445 (GISGAVGKIGAIVGVFGFLYT) threads the bilayer. The Extracellular portion of the chain corresponds to 446–450 (EYHIR). Residues 451–471 (IFLFVLIGCNLVGFIFTLLLP) form a helical membrane-spanning segment. At 472–508 (ESKGKSLEDLTGEIEEFQEEDEGSEVALSRPIHTVPL) the chain is on the cytoplasmic side.

The protein belongs to the major facilitator superfamily. Phosphate:H(+) symporter (TC 2.A.1.9) family.

The protein localises to the membrane. In terms of biological role, high-affinity transporter for external inorganic phosphate. This Oryza sativa subsp. japonica (Rice) protein is Putative inorganic phosphate transporter 1-13 (PHT1-13).